Consider the following 626-residue polypeptide: MSDKSELKAELERKKQRLAQIREEKKRKEEERKKKEAELKKDAVPLQDDSDLEKKRREADALLQSMGITSDVSAAPAPMSPTAKSVGSPSEAGSQDSGDGTTGPRTLHWDCDPSTVLLHSELGRGPLKLAMTKMTHVDFPPKEVVSYTKETQTPTMTEQKDEEDEEEETPAAQPEAETEKEKPEEKQVEEALPHELTEEEKLQILHSEEFMDFFDHSTRIVERALSEHVDVFFDYSGRDMEEKEGEMQAGTKLSLNRKFVDDRWSKQRVVTCLDWSPQYPELLVASYNNNEEAPHEPDGVALVWNMKYKKATPEYVFHCQSAVMSAAFAKFHPNLVVGGTYSGQIVLWDNRSNRRTPVQRTPLSAAAHTHPVYCVNVVGTQNAHNLISISTDGKMCSWSLDMLSQPQDSMELVFKQSKSVAVTSMSFPLGDVNNFVVGSEDGSVYTASRHGSRAGISEMFEGHHGPITGIHCHTAAGPVDFSHLFLTASFDWTVKLWSNKNNKPLYSFEDNSDYVYDVMWSPVHPALFACVDGLGRVDLWNLNNDTEVPTASVAVDGSPALNRLRWSQSGREIAVGDSEGQIHIYDVGEQIAVPRNDEWTRFVRTLVEINENRDDAEELAAQRLAA.

A compositionally biased stretch (basic and acidic residues) spans 20 to 43 (QIREEKKRKEEERKKKEAELKKDA). Disordered regions lie at residues 20-108 (QIRE…RTLH) and 142-197 (KEVV…HELT). Polar residues predominate over residues 82-99 (TAKSVGSPSEAGSQDSGD). A compositionally biased stretch (acidic residues) spans 160 to 169 (KDEEDEEEET). Over residues 177 to 197 (ETEKEKPEEKQVEEALPHELT) the composition is skewed to basic and acidic residues. WD repeat units follow at residues 265–314 (SKQR…ATPE), 318–358 (HCQS…RTPV), 367–408 (AHTH…QPQD), 417–457 (SKSV…AGIS), 462–507 (GHHG…PLYS), 510–550 (DNSD…EVPT), and 556–595 (DGSP…AVPR).

This sequence belongs to the dynein intermediate chain family. Homodimer. The cytoplasmic dynein 1 complex consists of two catalytic heavy chains (HCs) and a number of non-catalytic subunits presented by intermediate chains (ICs), light intermediate chains (LICs) and light chains (LCs); the composition seems to vary in respect to the IC, LIC and LC composition. The heavy chain homodimer serves as a scaffold for the probable homodimeric assembly of the respective non-catalytic subunits. The ICs and LICs bind directly to the HC dimer and the LCs assemble on the IC dimer.

Its subcellular location is the cytoplasm. It localises to the cytoskeleton. Its function is as follows. Acts as one of several non-catalytic accessory components of the cytoplasmic dynein 1 complex that are thought to be involved in linking dynein to cargos and to adapter proteins that regulate dynein function. Cytoplasmic dynein 1 acts as a motor for the intracellular retrograde motility of vesicles and organelles along microtubules. Plays a role in the development of anterior brain and cartilaginous structures. The sequence is that of Dynein, cytoplasmic 1, intermediate chain 2a (dync1i2a) from Danio rerio (Zebrafish).